A 652-amino-acid chain; its full sequence is Adhesion G protein-coupled receptor E3 (652 aa).

An N-terminal signal peptide occupies residues 1–21; it reads MQGPLLLPGLCFLLSLFGAVT. The Extracellular portion of the chain corresponds to 22–357; the sequence is QKTKTSCAKC…TSQEEDPVLT (336 aa). The region spanning 24–66 is the EGF-like 1 domain; it reads TKTSCAKCPPNASCVNNTHCTCNHGYTSGSGQKLFTFPLETCN. Disulfide bonds link cysteine 28/cysteine 37, cysteine 31/cysteine 43, cysteine 45/cysteine 65, cysteine 71/cysteine 85, cysteine 79/cysteine 94, and cysteine 96/cysteine 117. Residues asparagine 34 and asparagine 39 are each glycosylated (N-linked (GlcNAc...) asparagine). The region spanning 67–118 is the EGF-like 2; calcium-binding domain; that stretch reads DINECTPPYSVYCGFNAVCYNVEGSFYCQCVPGYRLHSGNEQFSNSNENTCQ. N-linked (GlcNAc...) asparagine glycosylation is found at asparagine 145, asparagine 189, asparagine 202, asparagine 250, asparagine 279, asparagine 327, and asparagine 334. Positions 183–351 constitute a GAIN-B domain; that stretch reads KVLKIQNDSV…AVLMALTSQE (169 aa). 2 disulfides stabilise this stretch: cysteine 304–cysteine 333 and cysteine 321–cysteine 335. Positions 304 to 351 are GPS; sequence CVYWKSTGQGSQWSRDGCFLIHVNKSHTMCNCSHLSSFAVLMALTSQE. A helical membrane pass occupies residues 358–378; that stretch reads VITYVGLSVSLLCLLLAALTF. Over 379–389 the chain is Cytoplasmic; the sequence is LLCKAIRNTST. A helical transmembrane segment spans residues 390-410; the sequence is SLHLQLSLCLFLAHLLFLVGI. Topologically, residues 411–416 are extracellular; that stretch reads DRTEPK. The chain crosses the membrane as a helical span at residues 417–437; that stretch reads VLCSIIAGALHYLYLAAFTWM. At 438-464 the chain is on the cytoplasmic side; the sequence is LLEGVHLFLTARNLTVVNYSSINRLMK. Residues 465–485 traverse the membrane as a helical segment; the sequence is WIMFPVGYGVPAVTVAISAAS. Residues 486–508 are Extracellular-facing; that stretch reads WPHLYGTADRCWLHLDQGFMWSF. The chain crosses the membrane as a helical span at residues 509-529; sequence LGPVCAIFSANLVLFILVFWI. At 530-557 the chain is on the cytoplasmic side; the sequence is LKRKLSSLNSEVSTIQNTRMLAFKATAQ. The helical transmembrane segment at 558 to 578 threads the bilayer; the sequence is LFILGCTWCLGLLQVGPAAQV. Residues 579–580 lie on the Extracellular side of the membrane; that stretch reads MA. The chain crosses the membrane as a helical span at residues 581 to 601; the sequence is YLFTIINSLQGFFIFLVYCLL. Topologically, residues 602–652 are cytoplasmic; that stretch reads SQQVQKQYQKWFREIVKSKSESETYTLSSKMGPDSKPSEGDVFPGQVKRKY. The disordered stretch occupies residues 621–652; that stretch reads SESETYTLSSKMGPDSKPSEGDVFPGQVKRKY.

Belongs to the G-protein coupled receptor 2 family. Adhesion G-protein coupled receptor (ADGR) subfamily. Forms a heterodimer, consisting of a large extracellular region (alpha subunit) non-covalently linked to a seven-transmembrane moiety (beta subunit). Post-translationally, proteolytically cleaved into 2 subunits, an extracellular alpha subunit and a seven-transmembrane subunit. Displays a predominantly leukocyte-restricted expression, with highest levels in neutrophils, monocytes and macrophages.

It is found in the cell membrane. The protein resides in the secreted. Its function is as follows. Orphan receptor that may play a role myeloid-myeloid interactions during immune and inflammatory responses. A ligand for the soluble form of this receptor is present at the surface of monocytes-derived macrophages and activated neutrophils. The protein is Adhesion G protein-coupled receptor E3 of Homo sapiens (Human).